We begin with the raw amino-acid sequence, 886 residues long: Vam6/Vps39-like protein (886 aa).

A CNH domain is found at 15 to 294 (PLQIDCLAAW…RFITSGGSNI (280 aa)). The CHCR repeat unit spans residues 573 to 750 (FTEDLPEVES…LLRMYLSPPS (178 aa)).

Belongs to the VAM6/VPS39 family. In terms of assembly, homooligomer. Interacts with TGFBR2 and, less efficiently, with TGFBR1; interaction with TGFBR2 is independent of the receptor kinase activity and of the presence of TGF-beta. Also interacts with ACVR2B, but not with BMPR2. Interacts with SMAD4, preferentially following TGF-beta treatment. Component of the putative homotypic fusion and vacuole protein sorting (HOPS) complex; the core of which composed of the class C Vps proteins VPS11, VPS16, VPS18 and VPS33A, is associated with VPS39 and VPS41. Interacts with PLEKHM2; involved in VPS39 recruitment to ARL8B-containing lysosomes. Associates with adapter protein complex 3 (AP-3) and clathrin:AP-3 complexes. Interacts with STX17; this interaction is increased in the absence of TMEM39A. Interacts with RAB7, RAB2A and RAB2B. Interacts with RAB2A (GTP-bound); the interaction contributes to obtaining a functional HOPS complex that promotes autophagosome-lysosome membrane fusion driven by STX17-SNAP29-VAMP8. Interacts with RAB39A (GTP-bound) and RAB39B (GTP-bound); interaction with RAB39A contributes to obtaining a functional HOPS complex.

It localises to the cytoplasm. The protein resides in the lysosome membrane. It is found in the late endosome membrane. Regulator of TGF-beta/activin signaling, inhibiting SMAD3- and activating SMAD2-dependent transcription. Acts by interfering with SMAD3/SMAD4 complex formation, this would lead to inhibition of SMAD3-dependent transcription and relieve SMAD3 inhibition of SMAD2-dependent promoters, thus increasing SMAD2-dependent transcription. In terms of biological role, plays a role in vesicle-mediated protein trafficking to lysosomal compartments including the endocytic membrane transport and autophagic pathways. Acts as a component of the HOPS endosomal tethering complex which is proposed to be involved in the Rab5-to-Rab7 endosome conversion probably implicating MON1A/B, and via binding SNAREs and SNARE complexes to mediate tethering and docking events during SNARE-mediated membrane fusion. The HOPS complex is proposed to be recruited to Rab7 on the late endosomal membrane and to regulate late endocytic, phagocytic and autophagic traffic towards lysosomes. Involved in homotypic vesicle fusions between late endosomes and in heterotypic fusions between late endosomes and lysosomes. Required for fusion of endosomes and autophagosomes with lysosomes. The chain is Vam6/Vps39-like protein from Mus musculus (Mouse).